The primary structure comprises 749 residues: Homeobox-leucine zipper protein ROC7 (749 aa).

Residues 26–98 (LDQHQQHQHQ…KKRYHRHTQH (73 aa)) are disordered. A compositionally biased stretch (basic and acidic residues) spans 46-57 (SDGRAPRDELEM). Over residues 68–78 (SGGGGGGGGSG) the composition is skewed to gly residues. Basic residues predominate over residues 86–97 (RPRKKRYHRHTQ). The homeobox DNA-binding region spans 88–147 (RKKRYHRHTQHQIQELEAFFKECPHPDDKQRKELSRELGLEPLQVKFWFQNKRTQMKTQH). Residues 137–218 (QNKRTQMKTQ…DRISAIAAKY (82 aa)) adopt a coiled-coil conformation. In terms of domain architecture, START spans 256-494 (ADFDKPLVIE…LERQCERLAS (239 aa)).

This sequence belongs to the HD-ZIP homeobox family. Class IV subfamily.

The protein resides in the nucleus. Its function is as follows. Probable transcription factor. In Oryza sativa subsp. indica (Rice), this protein is Homeobox-leucine zipper protein ROC7 (ROC7).